A 64-amino-acid chain; its full sequence is Transcription factor P13 (64 aa).

In terms of biological role, transcription factor that regulates expression of phage structural components with protein P14. The protein is Transcription factor P13 of Pseudoalteromonas phage PM2 (Bacteriophage PM2).